The sequence spans 63 residues: Beta-glucosidase A-3 (63 aa).

The active site involves aspartate 12. N-linked (GlcNAc...) asparagine glycans are attached at residues asparagine 48 and asparagine 56.

This sequence belongs to the glycosyl hydrolase 3 family.

It carries out the reaction Hydrolysis of terminal, non-reducing beta-D-glucosyl residues with release of beta-D-glucose.. Its pathway is glycan metabolism; cellulose degradation. The sequence is that of Beta-glucosidase A-3 from Aspergillus wentii.